Reading from the N-terminus, the 406-residue chain is Arginine biosynthesis bifunctional protein ArgJ (406 aa).

Substrate contacts are provided by threonine 152, lysine 179, threonine 190, glutamate 277, asparagine 401, and serine 406. Catalysis depends on threonine 190, which acts as the Nucleophile.

The protein belongs to the ArgJ family. Heterotetramer of two alpha and two beta chains.

It localises to the cytoplasm. The catalysed reaction is N(2)-acetyl-L-ornithine + L-glutamate = N-acetyl-L-glutamate + L-ornithine. The enzyme catalyses L-glutamate + acetyl-CoA = N-acetyl-L-glutamate + CoA + H(+). Its pathway is amino-acid biosynthesis; L-arginine biosynthesis; L-ornithine and N-acetyl-L-glutamate from L-glutamate and N(2)-acetyl-L-ornithine (cyclic): step 1/1. It functions in the pathway amino-acid biosynthesis; L-arginine biosynthesis; N(2)-acetyl-L-ornithine from L-glutamate: step 1/4. Functionally, catalyzes two activities which are involved in the cyclic version of arginine biosynthesis: the synthesis of N-acetylglutamate from glutamate and acetyl-CoA as the acetyl donor, and of ornithine by transacetylation between N(2)-acetylornithine and glutamate. In Neisseria gonorrhoeae (strain ATCC 700825 / FA 1090), this protein is Arginine biosynthesis bifunctional protein ArgJ.